The chain runs to 938 residues: RIPOR family member 3 (938 aa).

Phosphoserine occurs at positions 9, 24, and 340. Thr345 is subject to Phosphothreonine. Phosphoserine occurs at positions 351 and 384. 2 disordered regions span residues 402 to 430 and 579 to 603; these read EMDSFSSEDPRDTETSTSASTSDVGFLPV and FGGSQAPERDSPPPPRPSLKVSPSE.

This sequence belongs to the RIPOR family.

This chain is RIPOR family member 3, found in Mus musculus (Mouse).